A 616-amino-acid polypeptide reads, in one-letter code: MRVWLVCMVGLLGGLHGSNVEESEDMKKVRKIFEKAFSRKLYDSEVERIRKLEKELCLDTRVMIPFIFHGDRVVALPTTRYQDVDKSEKKYVEKVVVQLRWLVWRLMAWVYVPGGSSWIRDLINEVFEATVSRDPDPVSLYKGARRRSGIRLMDLVMKVFKQNVSMVSEFGQRLARSAEDRIQGIPGSLSPEERKKEEEMLRKIKEHGERLCTKERQEEMVRAQEIICDVCAYVWERDEDRMSFIMEVYSRHLCLKIVMPYTDIEVPLISYIDHHKLVSTDEKYKSMNIMAEVFKQAFIEHKGIDDESINNAVREVRERKRLEEMREMEERKRREEERAKNEEELLRMVEREKREESKGRGKKKGGKRGAGEAKEESKEEDGKEEEGVEAEEEESAEVPLVETAVGGARRKKSLKGKRKGDGHHYKIHSRVLRWKRSAEKIKRELDKGSEERWKNRSIEEIKEQKKVHDIVEVSELIKSKECDRFFFRTGKYMKGGSERWKMVANGILEEGGEKKVGKVEVGLFKGERGESVVYHLMFRPTETERAGMVGGSSFGKGDDVDEIKKEESSDMSGFRYPPGVRCEMTSNGNEFRIEYRNPKNTSEVLRTLTILRIPEI.

2 stretches are compositionally biased toward basic and acidic residues: residues 350-359 (EREKREESKG) and 369-381 (GAGE…KEED). Residues 350 to 427 (EREKREESKG…RKGDGHHYKI (78 aa)) form a disordered region. The segment covering 382-396 (GKEEEGVEAEEEESA) has biased composition (acidic residues). The segment covering 408 to 427 (ARRKKSLKGKRKGDGHHYKI) has biased composition (basic residues).

The protein belongs to the UPF0329 family.

This is UPF0329 protein ECU02_1540 from Encephalitozoon cuniculi (strain GB-M1) (Microsporidian parasite).